The primary structure comprises 1077 residues: ATP-dependent helicase HRQ1 (1077 aa).

The region spanning 299–483 (INSLHQGENV…DMFGINEVTL (185 aa)) is the Helicase ATP-binding domain. 312–319 (TSTSSGKS) is an ATP binding site. A DEAH box motif is present at residues 423–426 (DELH). One can recognise a Helicase C-terminal domain in the interval 521–678 (ILVQLILNNV…DLVLDFNNIL (158 aa)).

The protein belongs to the helicase family. HRQ1 subfamily. As to quaternary structure, forms heptamer rings. Interacts with RAD4. Mg(2+) is required as a cofactor.

It localises to the nucleus. It carries out the reaction Couples ATP hydrolysis with the unwinding of duplex DNA by translocating in the 3'-5' direction.. The catalysed reaction is ATP + H2O = ADP + phosphate + H(+). Its function is as follows. Helicase with 3'-5' helicase activity involved in genome stability. Functions in the RAD4-dependent nucleotide excision repair (NER) pathway and plays a critical role in DNA interstrand cross-link repair. Unwinds relatively long duplex DNA up to 120-bp and requires a long 3'-tail of at least 70 nucleotides for efficient unwinding of duplex DNA. Activity is significantly stimulated by a preexisting fork structure. Shows both processive helicase and DNA strand annealing activities. Affects telomere length by a non-catalytic mechanism, probably through inhibiting telomerase by competing with it for ssDNA binding. The polypeptide is ATP-dependent helicase HRQ1 (Saccharomyces cerevisiae (strain ATCC 204508 / S288c) (Baker's yeast)).